The sequence spans 277 residues: Digeranylgeranylglyceryl phosphate synthase (277 aa).

The next 8 membrane-spanning stretches (helical) occupy residues 16-36 (ILAG…IPPV), 40-60 (ILIF…NDYF), 93-113 (FIGL…ALGA), 129-149 (FIGN…GAVG), 153-173 (IDLA…REIM), 199-218 (SGII…FLPV), 222-244 (IGLG…IDVL), and 253-273 (GQKI…LGAL).

The protein belongs to the UbiA prenyltransferase family. DGGGP synthase subfamily. Requires Mg(2+) as cofactor.

Its subcellular location is the cell membrane. It catalyses the reaction sn-3-O-(geranylgeranyl)glycerol 1-phosphate + (2E,6E,10E)-geranylgeranyl diphosphate = 2,3-bis-O-(geranylgeranyl)-sn-glycerol 1-phosphate + diphosphate. The protein operates within membrane lipid metabolism; glycerophospholipid metabolism. Functionally, prenyltransferase that catalyzes the transfer of the geranylgeranyl moiety of geranylgeranyl diphosphate (GGPP) to the C2 hydroxyl of (S)-3-O-geranylgeranylglyceryl phosphate (GGGP). This reaction is the second ether-bond-formation step in the biosynthesis of archaeal membrane lipids. This Pyrococcus horikoshii (strain ATCC 700860 / DSM 12428 / JCM 9974 / NBRC 100139 / OT-3) protein is Digeranylgeranylglyceryl phosphate synthase.